The following is a 564-amino-acid chain: MKNINSEIRQQIRNAVINSINKSVETGELPSLEVTDITIEIPREKGHGDFSTNVAMQITKAAKKAPRQIADIIIKNIVTDGTYIDKVTCAGPGFINFTLDNSYLYETVNIIQQEKENYGRINIGNGKKVMVEFVSANPTGPLHMGNARGGALGDCIASVLDAAGYNVTREFLINDAGNQIEKFGTSLEARYIQLIKGEDAIEFPEDGYQGEDITEHMKDFIAIHGDKYINTDSEERKKVFVDFALPRNIARIKEGLESYGIHFDIWFSEQSLHKSGEVAETIQLLKDRGCTVEKEGALWLKGSVIGSEKDEVLVRNNGIPTYFAADIAYHRNKFEKRGFEWVINLWGADHHGHVARMKAAMAALGINPDKLDVVLFQLVRLYRNGEIARMSKRTGKSISLMDLVEEVGRDGVRYFFNTKASGSHLDFDLDLAVKQSNENPVFYVQYAHARICSMFKLLESEGIKVPSANAIKAELLDKPEELELIRKLSEYPDEVRISAETLEPSRLTRYVHDVASTFHSFYNACRVRGEEEELMQARLVLVDCTRIVVKNVLDLLSITAPERM.

A 'HIGH' region motif is present at residues 136-146; the sequence is ANPTGPLHMGN.

It belongs to the class-I aminoacyl-tRNA synthetase family. Monomer.

Its subcellular location is the cytoplasm. It catalyses the reaction tRNA(Arg) + L-arginine + ATP = L-arginyl-tRNA(Arg) + AMP + diphosphate. In Ruminiclostridium cellulolyticum (strain ATCC 35319 / DSM 5812 / JCM 6584 / H10) (Clostridium cellulolyticum), this protein is Arginine--tRNA ligase.